Here is a 351-residue protein sequence, read N- to C-terminus: Phosphoribosylformylglycinamidine cyclo-ligase (351 aa).

It belongs to the AIR synthase family.

The protein localises to the cytoplasm. The catalysed reaction is 2-formamido-N(1)-(5-O-phospho-beta-D-ribosyl)acetamidine + ATP = 5-amino-1-(5-phospho-beta-D-ribosyl)imidazole + ADP + phosphate + H(+). It participates in purine metabolism; IMP biosynthesis via de novo pathway; 5-amino-1-(5-phospho-D-ribosyl)imidazole from N(2)-formyl-N(1)-(5-phospho-D-ribosyl)glycinamide: step 2/2. The sequence is that of Phosphoribosylformylglycinamidine cyclo-ligase from Xylella fastidiosa (strain Temecula1 / ATCC 700964).